Here is a 428-residue protein sequence, read N- to C-terminus: Phosphoglucosamine mutase (428 aa).

Serine 96 (phosphoserine intermediate) is an active-site residue. Residues serine 96, aspartate 229, aspartate 231, and aspartate 233 each contribute to the Mg(2+) site. Serine 96 is subject to Phosphoserine.

It belongs to the phosphohexose mutase family. Requires Mg(2+) as cofactor. Activated by phosphorylation.

It carries out the reaction alpha-D-glucosamine 1-phosphate = D-glucosamine 6-phosphate. Functionally, catalyzes the conversion of glucosamine-6-phosphate to glucosamine-1-phosphate. This is Phosphoglucosamine mutase from Thermotoga neapolitana (strain ATCC 49049 / DSM 4359 / NBRC 107923 / NS-E).